The primary structure comprises 167 residues: Small ribosomal subunit protein uS5 (167 aa).

The S5 DRBM domain maps to 12 to 75; sequence LQEKLIAVNR…EKARRNMVTV (64 aa).

It belongs to the universal ribosomal protein uS5 family. Part of the 30S ribosomal subunit. Contacts proteins S4 and S8.

In terms of biological role, with S4 and S12 plays an important role in translational accuracy. Its function is as follows. Located at the back of the 30S subunit body where it stabilizes the conformation of the head with respect to the body. This is Small ribosomal subunit protein uS5 from Shewanella oneidensis (strain ATCC 700550 / JCM 31522 / CIP 106686 / LMG 19005 / NCIMB 14063 / MR-1).